A 485-amino-acid polypeptide reads, in one-letter code: Ataxin-10 (485 aa).

The protein belongs to the ataxin-10 family.

The protein resides in the cytoplasm. Its subcellular location is the perinuclear region. It is found in the midbody. Its function is as follows. May play a role in the regulation of cytokinesis. May play a role in signaling by stimulating protein glycosylation. Induces neuritogenesis by activating the Ras-MAP kinase pathway and is necessary for the survival of cerebellar neurons. Does not appear to play a major role in ciliogenesis. This Xenopus tropicalis (Western clawed frog) protein is Ataxin-10 (atxn10).